Consider the following 339-residue polypeptide: tRNA N6-adenosine threonylcarbamoyltransferase (339 aa).

Fe cation is bound by residues H107 and H111. Residues 129–133 (LVSGG), D162, G175, and N279 contribute to the substrate site. Fe cation is bound at residue D307.

The protein belongs to the KAE1 / TsaD family. Requires Fe(2+) as cofactor.

The protein localises to the cytoplasm. It carries out the reaction L-threonylcarbamoyladenylate + adenosine(37) in tRNA = N(6)-L-threonylcarbamoyladenosine(37) in tRNA + AMP + H(+). In terms of biological role, required for the formation of a threonylcarbamoyl group on adenosine at position 37 (t(6)A37) in tRNAs that read codons beginning with adenine. Is involved in the transfer of the threonylcarbamoyl moiety of threonylcarbamoyl-AMP (TC-AMP) to the N6 group of A37, together with TsaE and TsaB. TsaD likely plays a direct catalytic role in this reaction. This is tRNA N6-adenosine threonylcarbamoyltransferase from Campylobacter curvus (strain 525.92).